The chain runs to 852 residues: Zinc finger protein 484 (852 aa).

A KRAB domain is found at 8 to 78 (VSFKDVTVDF…DGEIPSQSRP (71 aa)). K156 participates in a covalent cross-link: Glycyl lysine isopeptide (Lys-Gly) (interchain with G-Cter in SUMO2). A C2H2-type 1; degenerate zinc finger spans residues 223 to 245 (CECNQCGKPLHHKQALIQQQKIH). Residues 279 to 301 (HECHECEAVFTQKSQLDGSQRVY) form a C2H2-type 2; degenerate zinc finger. The segment at 328–350 (YKCSDYGRAFIQKSDLFRCQRIH) adopts a C2H2-type 3; degenerate zinc-finger fold. The C2H2-type 4; degenerate zinc finger occupies 356–378 (YEYSECEKNLPQNSNLNIHKKIH). C2H2-type zinc fingers lie at residues 384–406 (FECT…QKIH), 412–434 (YVCT…ERIH), 440–462 (YECS…QRIH), 468–490 (FICS…QKIH), 496–518 (YICT…QKIH), 524–546 (YKCS…QKCH), 552–574 (YECS…QRIH), 580–602 (YVCT…ERIH), 608–630 (YECS…QQIH), 636–658 (YRCA…QKIH), 664–686 (YKCS…QQSH), 692–714 (YECS…QRIH), 720–742 (YICN…RRIH), 748–770 (YECS…HRIH), and 776–798 (YICA…QKIH). A Glycyl lysine isopeptide (Lys-Gly) (interchain with G-Cter in SUMO2) cross-link involves residue K816.

The protein belongs to the krueppel C2H2-type zinc-finger protein family.

It is found in the nucleus. Its function is as follows. May be involved in transcriptional regulation. This chain is Zinc finger protein 484 (ZNF484), found in Homo sapiens (Human).